The sequence spans 49 residues: Large ribosomal subunit protein bL33B (49 aa).

It belongs to the bacterial ribosomal protein bL33 family.

This Exiguobacterium sibiricum (strain DSM 17290 / CCUG 55495 / CIP 109462 / JCM 13490 / 255-15) protein is Large ribosomal subunit protein bL33B.